A 369-amino-acid polypeptide reads, in one-letter code: Tyrosinase-like protein orsC (369 aa).

A signal peptide spans 1-23; it reads MLAFNPLVTALAALIFLFCQANA. Cu cation is bound by residues His-112 and His-121. Residues Asn-165, Asn-179, Asn-253, and Asn-272 are each glycosylated (N-linked (GlcNAc...) asparagine). His-315 is a binding site for Cu cation.

Its pathway is secondary metabolite biosynthesis. Its function is as follows. Tyrosinase-like protein; part of the gene cluster that mediates the biosynthesis of orsellinic acid, as well as of the cathepsin K inhibitors F9775 A and F9775 B. The non-reducing polyketide synthase orsA produces orsellinic acid by condensing acetyl-CoA with 3 malonyl-CoA units. Further modifications by the decarboxylase orsB and the tyrosinase-like protein orsC lead to the production of F9775 A and F9775 B. The functions of orsD and orsE remain unclear since only orsB and orsC are required to convert orsellinic acid into F9775 A and F9775 B. In Emericella nidulans (strain FGSC A4 / ATCC 38163 / CBS 112.46 / NRRL 194 / M139) (Aspergillus nidulans), this protein is Tyrosinase-like protein orsC.